The chain runs to 939 residues: Intimin (939 aa).

A signal peptide spans 1–41 (MITHGFYARTRHKHKLKKTFIMLSAGLGLFFYVNQNSFANG). A peptidoglycan-binding region spans residues 40-153 (NGENYFKLGS…KLTKMSPDVT (114 aa)). The tract at residues 40–153 (NGENYFKLGS…KLTKMSPDVT (114 aa)) is sufficient for homodimerization. Residues 40-212 (NGENYFKLGS…LQAWLQHYGT (173 aa)) form a required for periplasmic localization region. Residues 63-112 (LFYTLKTGETVADLSKSQDINLSTIWSLNKHLYSSESEMMKAAPGQQIIL) enclose the LysM domain. Positions 189 to 430 (DTALGIAGNQ…PQYVNELRTL (242 aa)) are inverse autotransporter. The tract at residues 402–411 (LYSMQFRYQF) is signature sequence for beta-barrel assembly machinery (BAM), which recognizes the unfolded beta-barrel in the periplasm. Big-1 domains lie at 560–653 (VTDF…VIFV) and 660–751 (ITEI…VEFF). The tract at residues 750-939 (FFTTLTIDDG…ESNAYATCVK (190 aa)) is required and sufficient for interaction with intimin receptor Tir. Positions 842–939 (LIVPNMSKRV…ESNAYATCVK (98 aa)) are C-type lectin domain. The tract at residues 842–939 (LIVPNMSKRV…ESNAYATCVK (98 aa)) is intimin receptor Tir-binding. A disulfide bond links cysteine 860 and cysteine 937.

It belongs to the intimin/invasin family. Homodimer. Interacts with Tir.

The protein localises to the cell outer membrane. An inverse autotransporter. Adhesin, which mediates attachment to the human intestine epithelial cells. Necessary for the production of attaching and effacing lesions on infected human tissue culture cells. Anchored to the outer membrane by binding to peptidoglycan (PGN) via its periplasmic domain, thus helping in receptor interactions during host invasion. PGN-binding may also aid in resisting mechanical and chemical stress during transit of the bacterium through the gastrointestinal tract of the host. Periplasmic domain binds purified E.coli PGN sacculi under acidic conditions in vitro and in vivo, but does not bind to chitin. Periplasmic domain binds PGN sacculi with an apparent dissociation constant (Kd) of 0.8 uM. No binding to PGN in vitro at normal physiological pH 7.4. The sequence is that of Intimin from Escherichia coli O127:H6 (strain E2348/69 / EPEC).